A 352-amino-acid polypeptide reads, in one-letter code: Protein RecA (352 aa).

66–73 (GPESSGKT) serves as a coordination point for ATP. A disordered region spans residues 330 to 352 (TKDDSKVATVDKANEEQAAEPVQ).

The protein belongs to the RecA family.

It localises to the cytoplasm. In terms of biological role, can catalyze the hydrolysis of ATP in the presence of single-stranded DNA, the ATP-dependent uptake of single-stranded DNA by duplex DNA, and the ATP-dependent hybridization of homologous single-stranded DNAs. It interacts with LexA causing its activation and leading to its autocatalytic cleavage. The protein is Protein RecA of Psychrobacter cryohalolentis (strain ATCC BAA-1226 / DSM 17306 / VKM B-2378 / K5).